The sequence spans 103 residues: Small ribosomal subunit protein uS10 (103 aa).

It belongs to the universal ribosomal protein uS10 family. As to quaternary structure, part of the 30S ribosomal subunit.

Functionally, involved in the binding of tRNA to the ribosomes. This is Small ribosomal subunit protein uS10 from Leptothrix cholodnii (strain ATCC 51168 / LMG 8142 / SP-6) (Leptothrix discophora (strain SP-6)).